Here is a 493-residue protein sequence, read N- to C-terminus: Endoglucanase 23 (493 aa).

A signal peptide spans methionine 1 to proline 23. The Nucleophile role is filled by aspartate 78. The N-linked (GlcNAc...) asparagine glycan is linked to asparagine 297. Residue histidine 410 is part of the active site. A glycan (N-linked (GlcNAc...) asparagine) is linked at asparagine 465. Glutamate 470 is a catalytic residue.

Belongs to the glycosyl hydrolase 9 (cellulase E) family.

The protein localises to the secreted. It carries out the reaction Endohydrolysis of (1-&gt;4)-beta-D-glucosidic linkages in cellulose, lichenin and cereal beta-D-glucans.. This Arabidopsis thaliana (Mouse-ear cress) protein is Endoglucanase 23.